The following is a 199-amino-acid chain: 7-methyl-GTP pyrophosphatase (199 aa).

The Proton acceptor role is filled by aspartate 76.

It belongs to the Maf family. YceF subfamily. It depends on a divalent metal cation as a cofactor.

It localises to the cytoplasm. It carries out the reaction N(7)-methyl-GTP + H2O = N(7)-methyl-GMP + diphosphate + H(+). In terms of biological role, nucleoside triphosphate pyrophosphatase that hydrolyzes 7-methyl-GTP (m(7)GTP). May have a dual role in cell division arrest and in preventing the incorporation of modified nucleotides into cellular nucleic acids. In Brucella abortus biovar 1 (strain 9-941), this protein is 7-methyl-GTP pyrophosphatase.